The primary structure comprises 259 residues: Thiazole synthase (259 aa).

Catalysis depends on Lys102, which acts as the Schiff-base intermediate with DXP. 1-deoxy-D-xylulose 5-phosphate contacts are provided by residues Gly163, 189-190 (AG), and 211-212 (NT).

The protein belongs to the ThiG family. Homotetramer. Forms heterodimers with either ThiH or ThiS.

The protein resides in the cytoplasm. It carries out the reaction [ThiS sulfur-carrier protein]-C-terminal-Gly-aminoethanethioate + 2-iminoacetate + 1-deoxy-D-xylulose 5-phosphate = [ThiS sulfur-carrier protein]-C-terminal Gly-Gly + 2-[(2R,5Z)-2-carboxy-4-methylthiazol-5(2H)-ylidene]ethyl phosphate + 2 H2O + H(+). The protein operates within cofactor biosynthesis; thiamine diphosphate biosynthesis. Its function is as follows. Catalyzes the rearrangement of 1-deoxy-D-xylulose 5-phosphate (DXP) to produce the thiazole phosphate moiety of thiamine. Sulfur is provided by the thiocarboxylate moiety of the carrier protein ThiS. In vitro, sulfur can be provided by H(2)S. The polypeptide is Thiazole synthase (Novosphingobium aromaticivorans (strain ATCC 700278 / DSM 12444 / CCUG 56034 / CIP 105152 / NBRC 16084 / F199)).